A 139-amino-acid chain; its full sequence is MKPAARRKARKLAVQAIYSWQLSQNSFSDIEAQFLTENDTSKVDVDYFLELVRGVGGHYRTLDEALEPFLDRPIKELDPIELAVLRLAAYELRERVDVPYKVAINEAIELAKSFGADESHRFVNGVLDKAVDTFRPTRQ.

This sequence belongs to the NusB family.

Functionally, involved in transcription antitermination. Required for transcription of ribosomal RNA (rRNA) genes. Binds specifically to the boxA antiterminator sequence of the ribosomal RNA (rrn) operons. This chain is Transcription antitermination protein NusB, found in Idiomarina loihiensis (strain ATCC BAA-735 / DSM 15497 / L2-TR).